The primary structure comprises 121 residues: Transposase InsC for insertion element IS2A (121 aa).

Belongs to the transposase 8 family.

Functionally, involved in the transposition of the insertion sequence IS2. The sequence is that of Transposase InsC for insertion element IS2A (insC1) from Escherichia coli (strain K12).